A 208-amino-acid polypeptide reads, in one-letter code: FAS-associated death domain protein (208 aa).

Residues 3-81 (PFLVLLHSVS…RHDLLRRVDD (79 aa)) form the DED domain. In terms of domain architecture, Death spans 97-181 (LCAAFNVICD…LVADLVQEVQ (85 aa)). Arginine 117 carries (Microbial infection) N-beta-linked (GlcNAc) arginine glycosylation. The disordered stretch occupies residues 187 to 208 (QNRSGAMSPMSWNSDASTSEAS). Serine 194 carries the phosphoserine modification.

As to quaternary structure, can self-associate. Component of the AIM2 PANoptosome complex, a multiprotein complex that drives inflammatory cell death (PANoptosis). Component of the death-induced signaling complex (DISC) composed of cell surface receptor FAS/CD95 or TNFRSF1A, adapter protein FADD and the CASP8 protease; recruitment of CASP8 to the complex is required for processing of CASP8 into the p18 and p10 subunits. Interacts (via death domain) with FAS (via death domain). Interacts directly (via DED domain) with NOL3 (via CARD domain); inhibits death-inducing signaling complex (DISC) assembly by inhibiting the increase in FAS-FADD binding induced by FAS activation. Interacts with CFLAR, PEA15 and MBD4. When phosphorylated, part of a complex containing HIPK3 and FAS. May interact with MAVS/IPS1. Interacts with MOCV v-CFLAR protein and PIDD1. Interacts with RIPK1 and TRADD. Interacts with stimulated TNFRSF10B. Interacts with DDX24. In terms of assembly, (Microbial infection) Interacts with human papillomavirus 16/HPV16 protein E6. (Microbial infection) Interacts with molluscum contagiosum virus proteins MC159L/v-CFLAR and MC160L. Post-translationally, (Microbial infection) Glycosylated at Arg-117 by enteropathogenic E.coli protein NleB1, C.rodentium protein NleB and S.typhimurium protein Ssek1: arginine GlcNAcylation prevents recruitment of caspase-8 or caspase-10 to the activated Fas (CD95) or TNFR-1 receptors. Expressed in a wide variety of tissues, except for peripheral blood mononuclear leukocytes.

It localises to the cytoplasm. In terms of biological role, apoptotic adapter molecule that recruits caspases CASP8 or CASP10 to the activated FAS/CD95 or TNFRSF1A/TNFR-1 receptors. The resulting aggregate called the death-inducing signaling complex (DISC) performs CASP8 proteolytic activation. Active CASP8 initiates the subsequent cascade of caspases mediating apoptosis. Involved in interferon-mediated antiviral immune response, playing a role in the positive regulation of interferon signaling. The chain is FAS-associated death domain protein from Homo sapiens (Human).